The following is a 630-amino-acid chain: A disintegrin and metalloproteinase with thrombospondin motifs 4 (630 aa).

Residues 1 to 5 (RRTKR) constitute a propeptide that is removed on maturation. Residues 11 to 221 (RFVETLVVAD…GYGHCLLDKP (211 aa)) enclose the Peptidase M12B domain. 11 cysteine pairs are disulfide-bonded: Cys86–Cys138, Cys115–Cys120, Cys132–Cys216, Cys170–Cys200, Cys242–Cys265, Cys253–Cys275, Cys260–Cys294, Cys288–Cys299, Cys325–Cys362, Cys329–Cys367, and Cys340–Cys352. Asn96 carries an N-linked (GlcNAc...) asparagine glycan. His154 contributes to the Zn(2+) binding site. Glu155 is a catalytic residue. The Zn(2+) site is built by His158 and His164. The Disintegrin domain maps to 233–303 (GKDYDADRQC…CMGGRCLHVD (71 aa)). Positions 313 to 368 (AGGWGPWGPWGDCSRTCGGGVQFSSRDCTKPVPRNGGKYCEGRRTPFRSCNTKNCP) constitute a TSP type-1 domain. N-linked (GlcNAc...) asparagine glycosylation is present at Asn474. The interval 479 to 630 (SKQSGSFKKF…LRKRTWAGRK (152 aa)) is spacer.

Interacts with SRPX2. Requires Zn(2+) as cofactor. Post-translationally, the precursor is cleaved by a furin endopeptidase. Glycosylated. Can be O-fucosylated by POFUT2 on a serine or a threonine residue found within the consensus sequence C1-X(2)-(S/T)-C2-G of the TSP type-1 repeat domains where C1 and C2 are the first and second cysteine residue of the repeat, respectively. Fucosylated repeats can then be further glycosylated by the addition of a beta-1,3-glucose residue by the glucosyltransferase, B3GALTL. Fucosylation mediates the efficient secretion of ADAMTS family members. Can also be C-glycosylated with one or two mannose molecules on tryptophan residues within the consensus sequence W-X-X-W of the TPRs, and N-glycosylated. These other glycosylations can also facilitate secretion. In terms of tissue distribution, brain specific.

It localises to the secreted. Its subcellular location is the extracellular space. The protein localises to the extracellular matrix. The catalysed reaction is Glutamyl endopeptidase. Bonds cleaved include 370-Thr-Glu-Gly-Glu-|-Ala-Arg-Gly-Ser-377 in the interglobular domain of mammalian aggrecan.. In terms of biological role, cleaves aggrecan, a cartilage proteoglycan, at the '392-Glu-|-Ala-393' site and may be involved in its turnover. Also cleaves COMP. May play an important role in the destruction of aggrecan in arthritic diseases. The chain is A disintegrin and metalloproteinase with thrombospondin motifs 4 (Adamts4) from Rattus norvegicus (Rat).